The chain runs to 58 residues: MKISFLLLLAIVICSIGWTEAQFTNVSCSASSQCWPVCKKLFGTYRGKCMNSKCRCYS.

The first 21 residues, 1–21 (MKISFLLLLAIVICSIGWTEA), serve as a signal peptide directing secretion. A Pyrrolidone carboxylic acid modification is found at Gln-22. 3 cysteine pairs are disulfide-bonded: Cys-28-Cys-49, Cys-34-Cys-54, and Cys-38-Cys-56.

This sequence belongs to the short scorpion toxin superfamily. Potassium channel inhibitor family. Alpha-KTx 01 subfamily. In terms of tissue distribution, expressed by the venom gland.

It localises to the secreted. Functionally, potent blocker of both large-conductance calcium-activated potassium channels (KCa1.1/KCNMA1) and voltage-gated potassium channels (Kv1.3/KCNA3 and ERG1/Kv11.1/KCNH2). The polypeptide is Potassium channel toxin alpha-KTx 1.6 (Olivierus martensii (Manchurian scorpion)).